The following is a 140-amino-acid chain: MRIMGLDVGTKTIGVALSDPLGWTAQGLTTIRRRNLAADLAALKELVRRYGVEELVVGLPRNMNGSLGPQAEAVRAFARHLQAEVGLPVHFFDERLTTVAAGRVLLEADLSRRRRRQVIDQVAATYILQGYLDRLGQNGV.

This sequence belongs to the YqgF nuclease family.

The protein localises to the cytoplasm. Functionally, could be a nuclease involved in processing of the 5'-end of pre-16S rRNA. This is Putative pre-16S rRNA nuclease from Moorella thermoacetica (strain ATCC 39073 / JCM 9320).